The sequence spans 104 residues: MSRVCELTNRKKSFGNKVSHSNRKAKRIFLLNLHNVTLISNILNKKFKFRVAIRTLRTIDYKGNLDAFLLNTRTVKLSKKAQKIKRKLKKVLAKQEVELGISDA.

It belongs to the bacterial ribosomal protein bL28 family.

The protein is Large ribosomal subunit protein bL28 of Wolbachia sp. subsp. Brugia malayi (strain TRS).